The sequence spans 700 residues: Chaperonin CPN60, mitochondrial (700 aa).

A mitochondrion-targeting transit peptide spans 1-9 (MRMKRIHIL). Positions 636–700 (TYKHKLHDDE…SMNDEYNYDE (65 aa)) are disordered. Residues 644–700 (DEDTDEDDEEDEDDEDDEDDLDDDDYDDEDEEDEEDEEDEDDEDDEDSMNDEYNYDE) show a composition bias toward acidic residues.

It belongs to the chaperonin (HSP60) family.

The protein resides in the mitochondrion matrix. Implicated in mitochondrial protein import and macromolecular assembly. May facilitate the correct folding of imported proteins. May also prevent misfolding and promote the refolding and proper assembly of unfolded polypeptides generated under stress conditions in the mitochondrial matrix. This is Chaperonin CPN60, mitochondrial from Plasmodium falciparum (isolate FCR-3 / Gambia).